Consider the following 141-residue polypeptide: MAKKIVGYIKLQIPAGGANPAPPVGPALGQKGVNIMEFCKQFNAKTQPQAGMIIPVVITVFSDKSFTFVTKTPPASILLIKEAKLQKGSSEPNRNKVGKVTKEQVRKIAELKMPDLNANTVEAAERMVEGTARSMGITIEG.

This sequence belongs to the universal ribosomal protein uL11 family. As to quaternary structure, part of the ribosomal stalk of the 50S ribosomal subunit. Interacts with L10 and the large rRNA to form the base of the stalk. L10 forms an elongated spine to which L12 dimers bind in a sequential fashion forming a multimeric L10(L12)X complex. In terms of processing, one or more lysine residues are methylated.

In terms of biological role, forms part of the ribosomal stalk which helps the ribosome interact with GTP-bound translation factors. This Chloroherpeton thalassium (strain ATCC 35110 / GB-78) protein is Large ribosomal subunit protein uL11.